The following is a 323-amino-acid chain: Acetyl-coenzyme A carboxylase carboxyl transferase subunit alpha (323 aa).

The region spanning 39 to 293 (RLSKKSQQLT…RRALADSLRQ (255 aa)) is the CoA carboxyltransferase C-terminal domain.

Belongs to the AccA family. Acetyl-CoA carboxylase is a heterohexamer composed of biotin carboxyl carrier protein (AccB), biotin carboxylase (AccC) and two subunits each of ACCase subunit alpha (AccA) and ACCase subunit beta (AccD).

Its subcellular location is the cytoplasm. It carries out the reaction N(6)-carboxybiotinyl-L-lysyl-[protein] + acetyl-CoA = N(6)-biotinyl-L-lysyl-[protein] + malonyl-CoA. It participates in lipid metabolism; malonyl-CoA biosynthesis; malonyl-CoA from acetyl-CoA: step 1/1. Its function is as follows. Component of the acetyl coenzyme A carboxylase (ACC) complex. First, biotin carboxylase catalyzes the carboxylation of biotin on its carrier protein (BCCP) and then the CO(2) group is transferred by the carboxyltransferase to acetyl-CoA to form malonyl-CoA. This chain is Acetyl-coenzyme A carboxylase carboxyl transferase subunit alpha, found in Paraburkholderia phymatum (strain DSM 17167 / CIP 108236 / LMG 21445 / STM815) (Burkholderia phymatum).